Here is an 878-residue protein sequence, read N- to C-terminus: Leucine--tRNA ligase (878 aa).

The segment covering 1–14 has biased composition (low complexity); the sequence is MTASKSSSATASAS. The interval 1–23 is disordered; sequence MTASKSSSATASASDRPDRYDPI. A 'HIGH' region motif is present at residues 58–68; it reads PYPSGSLHMGH. The short motif at 632–636 is the 'KMSKS' region element; that stretch reads KMSKS. Lys635 is a binding site for ATP.

It belongs to the class-I aminoacyl-tRNA synthetase family.

Its subcellular location is the cytoplasm. The catalysed reaction is tRNA(Leu) + L-leucine + ATP = L-leucyl-tRNA(Leu) + AMP + diphosphate. In Synechococcus sp. (strain WH7803), this protein is Leucine--tRNA ligase.